Reading from the N-terminus, the 162-residue chain is Large ribosomal subunit protein uL15 (162 aa).

Residues 1–41 form a disordered region; the sequence is MKLSDIADNAGSRKKRMRVGRGIGSGKGKTAGRGGKGQTAR. Gly residues predominate over residues 21–37; the sequence is RGIGSGKGKTAGRGGKG.

This sequence belongs to the universal ribosomal protein uL15 family. Part of the 50S ribosomal subunit.

Functionally, binds to the 23S rRNA. This chain is Large ribosomal subunit protein uL15, found in Rhodopseudomonas palustris (strain BisB18).